Consider the following 293-residue polypeptide: Bifunctional protein FolD (293 aa).

NADP(+)-binding positions include 165-167 (GRS), Ser190, and Ile231.

It belongs to the tetrahydrofolate dehydrogenase/cyclohydrolase family. In terms of assembly, homodimer.

It catalyses the reaction (6R)-5,10-methylene-5,6,7,8-tetrahydrofolate + NADP(+) = (6R)-5,10-methenyltetrahydrofolate + NADPH. It carries out the reaction (6R)-5,10-methenyltetrahydrofolate + H2O = (6R)-10-formyltetrahydrofolate + H(+). Its pathway is one-carbon metabolism; tetrahydrofolate interconversion. Catalyzes the oxidation of 5,10-methylenetetrahydrofolate to 5,10-methenyltetrahydrofolate and then the hydrolysis of 5,10-methenyltetrahydrofolate to 10-formyltetrahydrofolate. This is Bifunctional protein FolD from Synechococcus sp. (strain CC9902).